The sequence spans 82 residues: Small ribosomal subunit protein bS16 (82 aa).

Belongs to the bacterial ribosomal protein bS16 family.

The polypeptide is Small ribosomal subunit protein bS16 (Vibrio vulnificus (strain CMCP6)).